Consider the following 79-residue polypeptide: RNA-binding protein Hfq (79 aa).

The Sm domain maps to 10–69; the sequence is DPFLNALRKEHVPVSIYLVNGIKLQGNIESFDQYVVLLRNTVTQMVYKHAISTVVPARAV.

It belongs to the Hfq family. As to quaternary structure, homohexamer.

RNA chaperone that binds small regulatory RNA (sRNAs) and mRNAs to facilitate mRNA translational regulation in response to envelope stress, environmental stress and changes in metabolite concentrations. Also binds with high specificity to tRNAs. The protein is RNA-binding protein Hfq of Cupriavidus metallidurans (strain ATCC 43123 / DSM 2839 / NBRC 102507 / CH34) (Ralstonia metallidurans).